Consider the following 508-residue polypeptide: Light-independent protochlorophyllide reductase subunit B (508 aa).

Asp36 contributes to the [4Fe-4S] cluster binding site. The active-site Proton donor is Asp294. A substrate-binding site is contributed by 429–430; sequence GM.

Belongs to the ChlB/BchB/BchZ family. Protochlorophyllide reductase is composed of three subunits; ChlL, ChlN and ChlB. Forms a heterotetramer of two ChlB and two ChlN subunits. The cofactor is [4Fe-4S] cluster.

The enzyme catalyses chlorophyllide a + oxidized 2[4Fe-4S]-[ferredoxin] + 2 ADP + 2 phosphate = protochlorophyllide a + reduced 2[4Fe-4S]-[ferredoxin] + 2 ATP + 2 H2O. The protein operates within porphyrin-containing compound metabolism; chlorophyll biosynthesis (light-independent). Functionally, component of the dark-operative protochlorophyllide reductase (DPOR) that uses Mg-ATP and reduced ferredoxin to reduce ring D of protochlorophyllide (Pchlide) to form chlorophyllide a (Chlide). This reaction is light-independent. The NB-protein (ChlN-ChlB) is the catalytic component of the complex. The protein is Light-independent protochlorophyllide reductase subunit B of Picosynechococcus sp. (strain ATCC 27264 / PCC 7002 / PR-6) (Agmenellum quadruplicatum).